The sequence spans 131 residues: Holo-[acyl-carrier-protein] synthase (131 aa).

Residues Asp-8 and Glu-59 each coordinate Mg(2+).

This sequence belongs to the P-Pant transferase superfamily. AcpS family. Mg(2+) serves as cofactor.

The protein localises to the cytoplasm. It catalyses the reaction apo-[ACP] + CoA = holo-[ACP] + adenosine 3',5'-bisphosphate + H(+). Its function is as follows. Transfers the 4'-phosphopantetheine moiety from coenzyme A to a Ser of acyl-carrier-protein. In Rickettsia rickettsii (strain Iowa), this protein is Holo-[acyl-carrier-protein] synthase.